Consider the following 248-residue polypeptide: Probable transcriptional regulatory protein Dde_2325 (248 aa).

Positions 1-15 (MAGHSKWKNIQHRKG) are enriched in basic residues. The interval 1–22 (MAGHSKWKNIQHRKGRQDAKKS) is disordered.

This sequence belongs to the TACO1 family.

The protein resides in the cytoplasm. This is Probable transcriptional regulatory protein Dde_2325 from Oleidesulfovibrio alaskensis (strain ATCC BAA-1058 / DSM 17464 / G20) (Desulfovibrio alaskensis).